The primary structure comprises 248 residues: Clathrin light chain A (248 aa).

The interval 1 to 92 (MAELDPFGAP…YYQESNGPTD (92 aa)) is disordered. The segment covering 13 to 25 (APGGPALGNGVAG) has biased composition (gly residues). Positions 61-71 (GPQPHGEPPGG) are enriched in pro residues. The segment at 100–162 (VDRLQSEPES…QLQKTKANNR (63 aa)) is involved in binding clathrin heavy chain. A phosphoserine mark is found at Ser-105 and Ser-206. Residue Lys-223 is modified to N6-acetyllysine. Ser-236 is subject to Phosphoserine. N6-acetyllysine is present on Lys-242.

This sequence belongs to the clathrin light chain family. As to quaternary structure, clathrin coats are formed from molecules containing 3 heavy chains and 3 light chains. Interacts with CALY; the interaction stimulates clathrin self-assembly and clathrin-mediated endocytosis. Interacts with CKAP5 and TACC3 forming the TACC3/ch-TOG/clathrin complex located at spindle inter-microtubules bridges; the complex implicates clathrin triskelions.

The protein localises to the cytoplasmic vesicle membrane. Its subcellular location is the membrane. It localises to the coated pit. The protein resides in the cytoplasm. It is found in the cytoskeleton. The protein localises to the spindle. Its function is as follows. Clathrin is the major protein of the polyhedral coat of coated pits and vesicles. Acts as a component of the TACC3/ch-TOG/clathrin complex proposed to contribute to stabilization of kinetochore fibers of the mitotic spindle by acting as inter-microtubule bridge. This Homo sapiens (Human) protein is Clathrin light chain A (CLTA).